The sequence spans 70 residues: Small ribosomal subunit protein bS21 (70 aa).

The protein belongs to the bacterial ribosomal protein bS21 family.

The sequence is that of Small ribosomal subunit protein bS21 from Azoarcus sp. (strain BH72).